Consider the following 178-residue polypeptide: Large ribosomal subunit protein uL6 (178 aa).

It belongs to the universal ribosomal protein uL6 family. In terms of assembly, part of the 50S ribosomal subunit.

Functionally, this protein binds to the 23S rRNA, and is important in its secondary structure. It is located near the subunit interface in the base of the L7/L12 stalk, and near the tRNA binding site of the peptidyltransferase center. This is Large ribosomal subunit protein uL6 from Nitrosococcus oceani (strain ATCC 19707 / BCRC 17464 / JCM 30415 / NCIMB 11848 / C-107).